Consider the following 526-residue polypeptide: ATP synthase subunit alpha (526 aa).

ATP is bound at residue 171-178 (GDRQTGKT).

It belongs to the ATPase alpha/beta chains family. As to quaternary structure, F-type ATPases have 2 components, CF(1) - the catalytic core - and CF(0) - the membrane proton channel. CF(1) has five subunits: alpha(3), beta(3), gamma(1), delta(1), epsilon(1). CF(0) has four main subunits: a, b, b' and c.

The protein localises to the cell inner membrane. The enzyme catalyses ATP + H2O + 4 H(+)(in) = ADP + phosphate + 5 H(+)(out). Produces ATP from ADP in the presence of a proton gradient across the membrane. The alpha chain is a regulatory subunit. This is ATP synthase subunit alpha from Chlorobium phaeobacteroides (strain BS1).